The primary structure comprises 320 residues: Protein TsetseEP (320 aa).

The first 19 residues, 1-19 (MKFFISFAFLCLVLSCVAA), serve as a signal peptide directing secretion. The disordered stretch occupies residues 192–320 (GLPEPEPEPE…ESKPNSLFNF (129 aa)). Residues 194 to 308 (PEPEPEPEPE…EPEPEPEPQP (115 aa)) are compositionally biased toward acidic residues. A 59 X 2 AA tandem repeats of P-E region spans residues 194–311 (PEPEPEPEPE…PEPEPQPEPE (118 aa)).

As to expression, expressed in the gut, but not salivary glands, of female and male flies (at protein level). Present in vesicles in midgut cells and in the lumen of the gut.

It localises to the secreted. The protein is Protein TsetseEP of Glossina morsitans morsitans (Savannah tsetse fly).